A 283-amino-acid polypeptide reads, in one-letter code: Extensin (283 aa).

Positions 1–24 are cleaved as a signal peptide; it reads MMGGKAALLLALVAVTLAVVEIQA. A disordered region spans residues 27-283; it reads GYGYGGGYPT…PPPPPPPPYY (257 aa). Residues 36-45 are compositionally biased toward pro residues; sequence TPTPKPPAKG. The span at 46-69 shows a compositional bias: basic and acidic residues; that stretch reads PKPEKPPTKGHGHKPEKPPKEHKP. Pro residues-rich tracts occupy residues 70-264 and 272-283; these read TPPT…PTYT and SSPPPPPPPPYY.

Hydroxylated on proline residues in the S-P-P-P-P repeat. In terms of processing, O-glycosylated on hydroxyprolines.

The protein resides in the secreted. Its subcellular location is the primary cell wall. Its function is as follows. Structural component in primary cell wall. This chain is Extensin (HRGP), found in Sorghum bicolor (Sorghum).